Here is a 102-residue protein sequence, read N- to C-terminus: Small ribosomal subunit protein uS10 (102 aa).

Belongs to the universal ribosomal protein uS10 family. In terms of assembly, part of the 30S ribosomal subunit.

Involved in the binding of tRNA to the ribosomes. In Nitrosospira multiformis (strain ATCC 25196 / NCIMB 11849 / C 71), this protein is Small ribosomal subunit protein uS10.